We begin with the raw amino-acid sequence, 622 residues long: Microtubule-associated protein 70-1 (622 aa).

The segment at 1-27 (MSDVSADGGFLSAEQATTPVAIPTPYP) is disordered. The stretch at 66–365 (DPVKVELNRL…LAISDRAAKS (300 aa)) forms a coiled coil. Positions 250-483 (ILDRMHRQKV…YSFNKACDET (234 aa)) are required for targeting to microtubules. Disordered regions lie at residues 388 to 512 (SSIS…TEDN) and 579 to 622 (AAMR…RSTQ). Composition is skewed to polar residues over residues 400–425 (SMSN…SNGF) and 432–453 (MRNS…TSKS). 2 stretches are compositionally biased toward basic and acidic residues: residues 479–501 (ACDE…EKPP) and 579–591 (AAMR…DNRA). Residues 541–590 (DKDDAIEMLAKKVETLTKAMEVEAKKMRREVAAMEKEVAAMRVDKDQDNR) adopt a coiled-coil conformation. Residues 594-605 (SSNTKPSSNTAQ) are compositionally biased toward polar residues.

This sequence belongs to the MAP70 family. In terms of assembly, interacts with MAP70.5 and itself.

It is found in the cytoplasm. Its subcellular location is the cytoskeleton. The protein resides in the phragmoplast. The protein localises to the spindle. Plant-specific protein that interact with microtubules. In association with MAP70.5, is essential for the normal banding pattern of secondary cell wall and for the proper development of xylem tracheary elements and wood formation. This is Microtubule-associated protein 70-1 (MAP70.1) from Arabidopsis thaliana (Mouse-ear cress).